Here is a 235-residue protein sequence, read N- to C-terminus: Elongation factor Tu (235 aa).

The 125-residue stretch at lysine 1–glutamate 125 folds into the tr-type G domain. Position 47–50 (asparagine 47–aspartate 50) interacts with GTP.

Belongs to the TRAFAC class translation factor GTPase superfamily. Classic translation factor GTPase family. EF-Tu/EF-1A subfamily. In terms of assembly, monomer.

It localises to the cytoplasm. The catalysed reaction is GTP + H2O = GDP + phosphate + H(+). Functionally, GTP hydrolase that promotes the GTP-dependent binding of aminoacyl-tRNA to the A-site of ribosomes during protein biosynthesis. The polypeptide is Elongation factor Tu (tufA) (Leptolyngbya ectocarpi (Phormidium ectocarpi)).